The primary structure comprises 94 residues: Defensin alpha 5 (94 aa).

An N-terminal signal peptide occupies residues 1 to 19 (MRTIAILAAILLVALQAQA). 3 disulfide bridges follow: Cys65–Cys93, Cys67–Cys82, and Cys72–Cys92.

The protein belongs to the alpha-defensin family. In terms of assembly, homodimer. Homotetramer. Interacts with B.antracis lef/lethal factor. In terms of processing, glycosylated. Post-translationally, proteolytically cleaved at Arg-62 by trypsin. Both the propeptide form proHD5/HD5(20-94) and HD5(56-94) are cleaved into the lumenal peptide form HD5(63-94) by trypsin. Unprocessed proHD5 exerts antimicrobial activities, but peptide potency is enhanced by peptide processing. Proteolytically cleaved in duodenal fluid; derived fragments are antimicrobially active against commensal bacteria (in vitro).

The protein localises to the secreted. It is found in the cytoplasmic vesicle. The protein resides in the secretory vesicle. In terms of biological role, host-defense peptide that maintains sterility in the urogenital system. Has antimicrobial activity against a wide range of bacteria, including Gram-negative E.coli, P.aeruginosa and S.typhimurium, and Gram-positive E.aerogenes, S.aureus, B.cereus, E.faecium and L.monocytogenes. Confers resistance to intestinal infection by S.typhimurium. Exhibits antimicrobial activity against enteric commensal bacteria such as B.adolescentis, L.acidophilus, B.breve, L.fermentum, B.longum and S.thermophilus. Binds to bacterial membranes and causes membrane disintegration. Induces the secretion of the chemokine IL-8 by intestinal epithelial cells. Binds to B.antracis lef/lethal factor, a major virulence factor from B.anthracis, and neutralizes its enzymatic activity. This chain is Defensin alpha 5 (DEFA5), found in Pan troglodytes (Chimpanzee).